The chain runs to 201 residues: dCTP deaminase, dUMP-forming (201 aa).

Residues 101–106, aspartate 119, 127–129, glutamine 148, tyrosine 162, and glutamine 174 each bind dCTP; these read KSSLGR and TLE. Glutamate 129 functions as the Proton donor/acceptor in the catalytic mechanism.

It belongs to the dCTP deaminase family. Homotrimer.

The catalysed reaction is dCTP + 2 H2O = dUMP + NH4(+) + diphosphate. It functions in the pathway pyrimidine metabolism; dUMP biosynthesis; dUMP from dCTP: step 1/1. Functionally, bifunctional enzyme that catalyzes both the deamination of dCTP to dUTP and the hydrolysis of dUTP to dUMP without releasing the toxic dUTP intermediate. The chain is dCTP deaminase, dUMP-forming from Clavibacter michiganensis subsp. michiganensis (strain NCPPB 382).